A 417-amino-acid chain; its full sequence is NADH-quinone oxidoreductase subunit D (417 aa).

The protein belongs to the complex I 49 kDa subunit family. As to quaternary structure, NDH-1 is composed of 14 different subunits. Subunits NuoB, C, D, E, F, and G constitute the peripheral sector of the complex.

It localises to the cell inner membrane. It catalyses the reaction a quinone + NADH + 5 H(+)(in) = a quinol + NAD(+) + 4 H(+)(out). Its function is as follows. NDH-1 shuttles electrons from NADH, via FMN and iron-sulfur (Fe-S) centers, to quinones in the respiratory chain. The immediate electron acceptor for the enzyme in this species is believed to be ubiquinone. Couples the redox reaction to proton translocation (for every two electrons transferred, four hydrogen ions are translocated across the cytoplasmic membrane), and thus conserves the redox energy in a proton gradient. The sequence is that of NADH-quinone oxidoreductase subunit D from Dechloromonas aromatica (strain RCB).